We begin with the raw amino-acid sequence, 312 residues long: Serpentine receptor class gamma-31 (312 aa).

7 helical membrane-spanning segments follow: residues 6 to 26, 38 to 58, 92 to 112, 132 to 152, 180 to 200, 218 to 238, and 259 to 279; these read LITQ…TVVF, FLKL…NFYI, FIFC…LTSI, TYIL…PLLV, FILV…IICW, LFLV…IAML, and LLSP…LIIF.

This sequence belongs to the nematode receptor-like protein srg family.

It is found in the membrane. The sequence is that of Serpentine receptor class gamma-31 (srg-31) from Caenorhabditis elegans.